A 326-amino-acid chain; its full sequence is ATP synthase gamma chain (326 aa).

The protein belongs to the ATPase gamma chain family. F-type ATPases have 2 components, CF(1) - the catalytic core - and CF(0) - the membrane proton channel. CF(1) has five subunits: alpha(3), beta(3), gamma(1), delta(1), epsilon(1). CF(0) has three main subunits: a, b and c.

The protein localises to the cell membrane. Functionally, produces ATP from ADP in the presence of a proton gradient across the membrane. The gamma chain is believed to be important in regulating ATPase activity and the flow of protons through the CF(0) complex. The chain is ATP synthase gamma chain from Rhodococcus opacus (strain B4).